The following is a 403-amino-acid chain: Imidazolonepropionase (403 aa).

Fe(3+) is bound by residues H69 and H71. The Zn(2+) site is built by H69 and H71. Residues R78, Y141, and H174 each contribute to the 4-imidazolone-5-propanoate site. Position 141 (Y141) interacts with N-formimidoyl-L-glutamate. H239 serves as a coordination point for Fe(3+). H239 contacts Zn(2+). Position 242 (Q242) interacts with 4-imidazolone-5-propanoate. D314 contributes to the Fe(3+) binding site. D314 is a Zn(2+) binding site. N-formimidoyl-L-glutamate contacts are provided by N316 and G318. S319 lines the 4-imidazolone-5-propanoate pocket.

It belongs to the metallo-dependent hydrolases superfamily. HutI family. Zn(2+) serves as cofactor. The cofactor is Fe(3+).

The protein localises to the cytoplasm. It carries out the reaction 4-imidazolone-5-propanoate + H2O = N-formimidoyl-L-glutamate. It participates in amino-acid degradation; L-histidine degradation into L-glutamate; N-formimidoyl-L-glutamate from L-histidine: step 3/3. Its function is as follows. Catalyzes the hydrolytic cleavage of the carbon-nitrogen bond in imidazolone-5-propanoate to yield N-formimidoyl-L-glutamate. It is the third step in the universal histidine degradation pathway. This Legionella pneumophila (strain Paris) protein is Imidazolonepropionase.